Here is a 95-residue protein sequence, read N- to C-terminus: Small ribosomal subunit protein uS19 (95 aa).

Belongs to the universal ribosomal protein uS19 family.

Its function is as follows. Protein S19 forms a complex with S13 that binds strongly to the 16S ribosomal RNA. This is Small ribosomal subunit protein uS19 from Bdellovibrio bacteriovorus (strain ATCC 15356 / DSM 50701 / NCIMB 9529 / HD100).